Consider the following 155-residue polypeptide: Large ribosomal subunit protein eL24A (155 aa).

S7 carries the post-translational modification Phosphoserine. Residues 66–155 (EVAKKRSRKT…AFQKVAATSR (90 aa)) are disordered. The segment covering 89-129 (LIKERRSLKPEVRKANREEKLKANKEKKKAEKAARKAEKAK) has biased composition (basic and acidic residues). The segment covering 131–142 (AGTQSSKFSKQQ) has biased composition (polar residues).

Belongs to the eukaryotic ribosomal protein eL24 family. Component of the large ribosomal subunit (LSU). Mature yeast ribosomes consist of a small (40S) and a large (60S) subunit. The 40S small subunit contains 1 molecule of ribosomal RNA (18S rRNA) and 33 different proteins (encoded by 57 genes). The large 60S subunit contains 3 rRNA molecules (25S, 5.8S and 5S rRNA) and 46 different proteins (encoded by 81 genes).

The protein resides in the cytoplasm. Functionally, component of the ribosome, a large ribonucleoprotein complex responsible for the synthesis of proteins in the cell. The small ribosomal subunit (SSU) binds messenger RNAs (mRNAs) and translates the encoded message by selecting cognate aminoacyl-transfer RNA (tRNA) molecules. The large subunit (LSU) contains the ribosomal catalytic site termed the peptidyl transferase center (PTC), which catalyzes the formation of peptide bonds, thereby polymerizing the amino acids delivered by tRNAs into a polypeptide chain. The nascent polypeptides leave the ribosome through a tunnel in the LSU and interact with protein factors that function in enzymatic processing, targeting, and the membrane insertion of nascent chains at the exit of the ribosomal tunnel. The chain is Large ribosomal subunit protein eL24A from Saccharomyces cerevisiae (strain ATCC 204508 / S288c) (Baker's yeast).